Here is a 125-residue protein sequence, read N- to C-terminus: Large ribosomal subunit protein eL8 (125 aa).

The protein belongs to the eukaryotic ribosomal protein eL8 family. In terms of assembly, part of the 50S ribosomal subunit. Probably part of the RNase P complex.

It is found in the cytoplasm. Functionally, multifunctional RNA-binding protein that recognizes the K-turn motif in ribosomal RNA, the RNA component of RNase P, box H/ACA, box C/D and box C'/D' sRNAs. The protein is Large ribosomal subunit protein eL8 of Metallosphaera sedula (strain ATCC 51363 / DSM 5348 / JCM 9185 / NBRC 15509 / TH2).